The following is a 357-amino-acid chain: Probable cinnamyl alcohol dehydrogenase 2 (357 aa).

A Zn(2+)-binding site is contributed by cysteine 47. Serine 49 provides a ligand contact to NADP(+). Zn(2+)-binding residues include histidine 69, glutamate 70, cysteine 100, cysteine 103, cysteine 106, cysteine 114, and cysteine 163. NADP(+)-binding positions include threonine 167, 188–193 (GLGGVG), 211–216 (SSSDKK), threonine 251, glycine 275, and 298–300 (SFI).

Belongs to the zinc-containing alcohol dehydrogenase family. As to quaternary structure, homodimer. Zn(2+) serves as cofactor.

It catalyses the reaction (E)-cinnamyl alcohol + NADP(+) = (E)-cinnamaldehyde + NADPH + H(+). The enzyme catalyses (E)-coniferol + NADP(+) = (E)-coniferaldehyde + NADPH + H(+). The catalysed reaction is (E)-sinapyl alcohol + NADP(+) = (E)-sinapaldehyde + NADPH + H(+). It carries out the reaction (E)-4-coumaroyl alcohol + NADP(+) = (E)-4-coumaraldehyde + NADPH + H(+). It catalyses the reaction (E)-caffeyl alcohol + NADP(+) = (E)-caffeyl aldehyde + NADPH + H(+). It functions in the pathway aromatic compound metabolism; phenylpropanoid biosynthesis. Its function is as follows. Involved in lignin biosynthesis. Catalyzes the final step specific for the production of lignin monomers. Catalyzes the NADPH-dependent reduction of coniferaldehyde, 5-hydroxyconiferaldehyde, sinapaldehyde, 4-coumaraldehyde and caffeyl aldehyde to their respective alcohols. The chain is Probable cinnamyl alcohol dehydrogenase 2 (CAD2) from Picea abies (Norway spruce).